The sequence spans 171 residues: S-ribosylhomocysteine lyase (171 aa).

Fe cation is bound by residues H54, H58, and C128.

Belongs to the LuxS family. In terms of assembly, homodimer. It depends on Fe cation as a cofactor.

The catalysed reaction is S-(5-deoxy-D-ribos-5-yl)-L-homocysteine = (S)-4,5-dihydroxypentane-2,3-dione + L-homocysteine. Involved in the synthesis of autoinducer 2 (AI-2) which is secreted by bacteria and is used to communicate both the cell density and the metabolic potential of the environment. The regulation of gene expression in response to changes in cell density is called quorum sensing. Catalyzes the transformation of S-ribosylhomocysteine (RHC) to homocysteine (HC) and 4,5-dihydroxy-2,3-pentadione (DPD). In Yersinia pseudotuberculosis serotype O:1b (strain IP 31758), this protein is S-ribosylhomocysteine lyase.